Here is a 485-residue protein sequence, read N- to C-terminus: Protein nucleotidyltransferase YdiU (485 aa).

ATP contacts are provided by Gly90, Gly92, Arg93, Lys113, Asp125, Gly126, Arg176, and Arg183. The Proton acceptor role is filled by Asp252. Positions 253 and 262 each coordinate Mg(2+). An ATP-binding site is contributed by Asp262.

The protein belongs to the SELO family. Mg(2+) serves as cofactor. Mn(2+) is required as a cofactor.

The enzyme catalyses L-seryl-[protein] + ATP = 3-O-(5'-adenylyl)-L-seryl-[protein] + diphosphate. It carries out the reaction L-threonyl-[protein] + ATP = 3-O-(5'-adenylyl)-L-threonyl-[protein] + diphosphate. It catalyses the reaction L-tyrosyl-[protein] + ATP = O-(5'-adenylyl)-L-tyrosyl-[protein] + diphosphate. The catalysed reaction is L-histidyl-[protein] + UTP = N(tele)-(5'-uridylyl)-L-histidyl-[protein] + diphosphate. The enzyme catalyses L-seryl-[protein] + UTP = O-(5'-uridylyl)-L-seryl-[protein] + diphosphate. It carries out the reaction L-tyrosyl-[protein] + UTP = O-(5'-uridylyl)-L-tyrosyl-[protein] + diphosphate. Functionally, nucleotidyltransferase involved in the post-translational modification of proteins. It can catalyze the addition of adenosine monophosphate (AMP) or uridine monophosphate (UMP) to a protein, resulting in modifications known as AMPylation and UMPylation. This chain is Protein nucleotidyltransferase YdiU, found in Vibrio atlanticus (strain LGP32) (Vibrio splendidus (strain Mel32)).